A 668-amino-acid polypeptide reads, in one-letter code: DNA ligase (668 aa).

NAD(+) contacts are provided by residues 32–36 (DAEYD), 81–82 (SL), and E113. K115 functions as the N6-AMP-lysine intermediate in the catalytic mechanism. 4 residues coordinate NAD(+): R136, E173, K289, and K313. 4 residues coordinate Zn(2+): C407, C410, C425, and C431. Residues 590–668 (ASEQPFAGKT…EEELQQALQG (79 aa)) enclose the BRCT domain.

Belongs to the NAD-dependent DNA ligase family. LigA subfamily. The cofactor is Mg(2+). It depends on Mn(2+) as a cofactor.

The enzyme catalyses NAD(+) + (deoxyribonucleotide)n-3'-hydroxyl + 5'-phospho-(deoxyribonucleotide)m = (deoxyribonucleotide)n+m + AMP + beta-nicotinamide D-nucleotide.. DNA ligase that catalyzes the formation of phosphodiester linkages between 5'-phosphoryl and 3'-hydroxyl groups in double-stranded DNA using NAD as a coenzyme and as the energy source for the reaction. It is essential for DNA replication and repair of damaged DNA. In Aeromonas hydrophila subsp. hydrophila (strain ATCC 7966 / DSM 30187 / BCRC 13018 / CCUG 14551 / JCM 1027 / KCTC 2358 / NCIMB 9240 / NCTC 8049), this protein is DNA ligase.